The primary structure comprises 741 residues: Zinc finger and BTB domain-containing protein 20 (741 aa).

A compositionally biased stretch (basic and acidic residues) spans 1 to 17 (MLERKKPKTAENQKASE). Residues 1 to 32 (MLERKKPKTAENQKASEENEITQPGGSSAKPG) are disordered. One can recognise a BTB domain in the interval 104–167 (CDVTVRIHGS…MYSGVLRVSQ (64 aa)). A disordered region spans residues 203–235 (GIQDSGQDTPRGTPESGTSGQSSDTESGYLQSH). Polar residues predominate over residues 206-235 (DSGQDTPRGTPESGTSGQSSDTESGYLQSH). Residue Thr-211 is modified to Phosphothreonine. Lys-330 participates in a covalent cross-link: Glycyl lysine isopeptide (Lys-Gly) (interchain with G-Cter in SUMO1); alternate. A Glycyl lysine isopeptide (Lys-Gly) (interchain with G-Cter in SUMO2); alternate cross-link involves residue Lys-330. Residues 350–440 (RNESEECTED…SSPERSNEVE (91 aa)) form a disordered region. Ser-353 carries the phosphoserine modification. Acidic residues predominate over residues 354–367 (EECTEDTDQAEGTE). Thr-357 carries the phosphothreonine modification. Residue Lys-371 forms a Glycyl lysine isopeptide (Lys-Gly) (interchain with G-Cter in SUMO2) linkage. Residues 404 to 423 (AEPTQPEQAAEAPAEGGPQT) are compositionally biased toward low complexity. Residues 424 to 434 (NQLETGASSPE) are compositionally biased toward polar residues. C2H2-type zinc fingers lie at residues 578–600 (YECT…MFVH), 606–628 (HQCS…MVTH), 634–656 (YQCS…MRLH), and 662–684 (YECY…VALH). 2 positions are modified to phosphothreonine: Thr-690 and Thr-695. The C2H2-type 5 zinc-finger motif lies at 715–737 (YVCSVCPAKFDQIEQFNDHMRMH). Residue Lys-723 forms a Glycyl lysine isopeptide (Lys-Gly) (interchain with G-Cter in SUMO2) linkage.

In terms of assembly, can homodimerize. Binds to DNA. In terms of processing, sumoylated with SUMO1. Expressed in spleen, lymph node, thymus, peripheral blood leukocytes, and fetal liver.

The protein resides in the nucleus. May be a transcription factor that may be involved in hematopoiesis, oncogenesis, and immune responses. Plays a role in postnatal myogenesis, may be involved in the regulation of satellite cells self-renewal. The polypeptide is Zinc finger and BTB domain-containing protein 20 (ZBTB20) (Homo sapiens (Human)).